A 293-amino-acid chain; its full sequence is Epidermal growth factor-like protein 8 (293 aa).

A signal peptide spans 1–28; that stretch reads MGLWAELCISLRGLSFFLVLMTGEGTRG. The 79-residue stretch at 34 to 112 folds into the EMI domain; that stretch reads SLGVCSKQTL…PHPGALTCDA (79 aa). 9 cysteine pairs are disulfide-bonded: Cys-38–Cys-97, Cys-65–Cys-71, Cys-96–Cys-110, Cys-114–Cys-124, Cys-118–Cys-130, Cys-132–Cys-141, Cys-148–Cys-159, Cys-155–Cys-168, and Cys-170–Cys-183. An N-linked (GlcNAc...) asparagine glycan is attached at Asn-50. The EGF-like 1 domain occupies 111 to 142; that stretch reads DAICSKPCLNGGVCTGPDRCECAPGWGGKHCH. In terms of domain architecture, EGF-like 2; calcium-binding spans 144 to 184; that stretch reads DVDECRASLTLCSHGCLNTLGSFLCSCPHPLVLGLDGRTCA. The stretch at 206–235 forms a coiled coil; sequence SEEERALRWEVAELRGRLEKLEQWATQAGA.

In terms of tissue distribution, ubiquitously expressed in brain, kidney, thymus and lung.

Its subcellular location is the secreted. The polypeptide is Epidermal growth factor-like protein 8 (Egfl8) (Mus musculus (Mouse)).